Here is a 243-residue protein sequence, read N- to C-terminus: MSDVTLLRIGIAIVGILFVAAVFFFSTPKTSAHRVRTKKEEPPRERREPMLSTEADNSPPQGVDEVPASVSQQQVNPEANKPGEVQLGKRPTNHFDKIILLFVAAKAEHTLRGEDIVVAAEKTGMIFGYMNVFHRLVEGYPEHGPIFSMASILKPGSFDMANIREMQIPAISFFLTLPAPMTALDAWEKMLPTVQRMAELLDGVVLDESRNALGRQRIAHIRDELRAYDRQQQVPPLIKNSRW.

The Periplasmic portion of the chain corresponds to 1–4 (MSDV). The chain crosses the membrane as a helical span at residues 5 to 25 (TLLRIGIAIVGILFVAAVFFF). The Cytoplasmic portion of the chain corresponds to 26-243 (STPKTSAHRV…VPPLIKNSRW (218 aa)). A disordered region spans residues 32–89 (AHRVRTKKEEPPRERREPMLSTEADNSPPQGVDEVPASVSQQQVNPEANKPGEVQLGK). Residues 38-49 (KKEEPPRERREP) are compositionally biased toward basic and acidic residues.

The protein belongs to the ZipA family. As to quaternary structure, interacts with FtsZ via their C-terminal domains.

It localises to the cell inner membrane. Its function is as follows. Essential cell division protein that stabilizes the FtsZ protofilaments by cross-linking them and that serves as a cytoplasmic membrane anchor for the Z ring. Also required for the recruitment to the septal ring of downstream cell division proteins. The protein is Cell division protein ZipA of Xylella fastidiosa (strain 9a5c).